A 141-amino-acid polypeptide reads, in one-letter code: Large ribosomal subunit protein bL17 (141 aa).

This sequence belongs to the bacterial ribosomal protein bL17 family. In terms of assembly, part of the 50S ribosomal subunit. Contacts protein L32.

In Allorhizobium ampelinum (strain ATCC BAA-846 / DSM 112012 / S4) (Agrobacterium vitis (strain S4)), this protein is Large ribosomal subunit protein bL17.